The sequence spans 275 residues: Phosphonoacetaldehyde hydrolase (275 aa).

Catalysis depends on aspartate 15, which acts as the Nucleophile. 2 residues coordinate Mg(2+): aspartate 15 and alanine 17. Catalysis depends on lysine 56, which acts as the Schiff-base intermediate with substrate. Mg(2+) is bound at residue aspartate 189.

It belongs to the HAD-like hydrolase superfamily. PhnX family. Homodimer. It depends on Mg(2+) as a cofactor.

The enzyme catalyses phosphonoacetaldehyde + H2O = acetaldehyde + phosphate + H(+). Its function is as follows. Involved in phosphonate degradation. This chain is Phosphonoacetaldehyde hydrolase, found in Pseudomonas putida (Arthrobacter siderocapsulatus).